The primary structure comprises 454 residues: Capsid vertex component 1 (454 aa).

The disordered stretch occupies residues 197 to 227; the sequence is TVRGESLDPPVSQKGPARTRHRPPPVRLSFN.

It belongs to the herpesviridae CVC1 protein family. In terms of assembly, interacts (via C-terminus) with capsid vertex component 2/CVC2.

It is found in the virion. Its subcellular location is the host nucleus. Capsid vertex-specific component that plays a role during viral DNA encapsidation, assuring correct genome cleavage and presumably stabilizing capsids that contain full-length viral genomes. The sequence is that of Capsid vertex component 1 from Human herpesvirus 8 type P (isolate GK18) (HHV-8).